The chain runs to 312 residues: Porphobilinogen deaminase (312 aa).

Cys-241 carries the S-(dipyrrolylmethanemethyl)cysteine modification.

This sequence belongs to the HMBS family. As to quaternary structure, monomer. It depends on dipyrromethane as a cofactor.

The catalysed reaction is 4 porphobilinogen + H2O = hydroxymethylbilane + 4 NH4(+). It participates in porphyrin-containing compound metabolism; protoporphyrin-IX biosynthesis; coproporphyrinogen-III from 5-aminolevulinate: step 2/4. The protein operates within porphyrin-containing compound metabolism; chlorophyll biosynthesis. Functionally, tetrapolymerization of the monopyrrole PBG into the hydroxymethylbilane pre-uroporphyrinogen in several discrete steps. This is Porphobilinogen deaminase (hemC) from Chlorobaculum parvum (strain DSM 263 / NCIMB 8327) (Chlorobium vibrioforme subsp. thiosulfatophilum).